Reading from the N-terminus, the 1349-residue chain is Elongator complex protein 1 (1349 aa).

Phosphoserine is present on residues Ser-529, Ser-539, Ser-551, Ser-636, and Ser-828. The interval 919 to 1349 (QDVNVVYKSA…DFPKSHIVDF (431 aa)) is mediates dimerization. Phosphoserine; by HRR25 is present on residues Ser-1198 and Ser-1202. Ser-1205 and Ser-1209 each carry phosphoserine. Over residues 1214 to 1228 (YTGKTGGTAKTGASR) the composition is skewed to low complexity. The interval 1214 to 1245 (YTGKTGGTAKTGASRRTAKNKRREERKRARGK) is disordered. The interval 1228–1246 (RRTAKNKRREERKRARGKK) is required for binding to tRNA.

The protein belongs to the ELP1/IKA1 family. Homodimer; dimerization promotes ELP1/IKI3 stability and elongator complex formation. Component of the elongator complex which consists of ELP1/IKI3, ELP2, ELP3, ELP4, ELP5/IKI1 and ELP6. The elongator complex is composed of two copies of the Elp123 subcomplex (composed of ELP1/IKI3, ELP2 and ELP3) and two copies of the Elp456 subcomplex (composed of ELP4, ELP5/IKI1 and ELP6). The Elp123 subcomplex forms a two-lobed scaffold, which binds the Elp456 subcomplex asymmetrically. In the complex, ELP1/IKI3 interacts with ELP2. In each lobe, ELP2 is tightly sandwiched between ELP1/IKI3 and ELP3. The Elp123 subcomplex binds tRNA through ELP1/IKI3 and ELP3 and can bind 2 tRNAs simultaneously. tRNA-binding induces conformational rearrangements which precisely position the targeted anticodon base in the active site. The Elp456 subcomplex binds tRNA and has ATPase activity. ELP1/IKI3 interacts with HRR25 and KTI12. Interacts with KTI11/DPH3. Post-translationally, phosphorylation promotes the tRNA modification function of the elongator complex.

It localises to the cytoplasm. The protein resides in the nucleus. It participates in tRNA modification; 5-methoxycarbonylmethyl-2-thiouridine-tRNA biosynthesis. Functionally, component of the elongator complex which is required for multiple tRNA modifications, including mcm5U (5-methoxycarbonylmethyl uridine), mcm5s2U (5-methoxycarbonylmethyl-2-thiouridine), and ncm5U (5-carbamoylmethyl uridine). The elongator complex catalyzes formation of carboxymethyluridine in the wobble base at position 34 in tRNAs. Functions as a gamma-toxin target (TOT); disruption of the complex confers resistance to Kluyveromyces lactis toxin zymocin (pGKL1 killer toxin). May also be involved in sensitivity to Pichia inositovora toxin. ELP1/IKI3 binds to tRNA, mediating interaction of the elongator complex with tRNA. Independently, may be involved in polarized exocytosis. The polypeptide is Elongator complex protein 1 (IKI3) (Saccharomyces cerevisiae (strain ATCC 204508 / S288c) (Baker's yeast)).